We begin with the raw amino-acid sequence, 413 residues long: Tyrosine--tRNA ligase (413 aa).

The short motif at 59 to 68 is the 'HIGH' region element; the sequence is PTAPDIHIGH. The 'KMSKS' region signature appears at 243 to 247; the sequence is KMSKS. K246 contributes to the ATP binding site. Residues 351-411 enclose the S4 RNA-binding domain; that stretch reads LAIGQLLKQA…GKRRFARVTL (61 aa).

This sequence belongs to the class-I aminoacyl-tRNA synthetase family. TyrS type 2 subfamily. In terms of assembly, homodimer.

The protein localises to the cytoplasm. It carries out the reaction tRNA(Tyr) + L-tyrosine + ATP = L-tyrosyl-tRNA(Tyr) + AMP + diphosphate + H(+). Functionally, catalyzes the attachment of tyrosine to tRNA(Tyr) in a two-step reaction: tyrosine is first activated by ATP to form Tyr-AMP and then transferred to the acceptor end of tRNA(Tyr). This chain is Tyrosine--tRNA ligase, found in Burkholderia lata (strain ATCC 17760 / DSM 23089 / LMG 22485 / NCIMB 9086 / R18194 / 383).